Consider the following 571-residue polypeptide: Putative phospholipase B-like 1 (571 aa).

The signal sequence occupies residues 1-18 (MNWIFIFLAAAVAIGCEA). 4 N-linked (GlcNAc...) asparagine glycosylation sites follow: Asn-62, Asn-149, Asn-442, and Asn-473.

This sequence belongs to the phospholipase B-like family.

The protein localises to the lysosome. Putative phospholipase. This chain is Putative phospholipase B-like 1, found in Caenorhabditis elegans.